The chain runs to 188 residues: Pyridoxal 5'-phosphate synthase subunit PdxT (188 aa).

L-glutamine is bound at residue 46–48 (GES). Cysteine 78 acts as the Nucleophile in catalysis. L-glutamine is bound by residues arginine 106 and 132 to 133 (IR). Catalysis depends on charge relay system residues histidine 169 and glutamate 171.

It belongs to the glutaminase PdxT/SNO family. In the presence of PdxS, forms a dodecamer of heterodimers. Only shows activity in the heterodimer.

It carries out the reaction aldehydo-D-ribose 5-phosphate + D-glyceraldehyde 3-phosphate + L-glutamine = pyridoxal 5'-phosphate + L-glutamate + phosphate + 3 H2O + H(+). The enzyme catalyses L-glutamine + H2O = L-glutamate + NH4(+). The protein operates within cofactor biosynthesis; pyridoxal 5'-phosphate biosynthesis. Its function is as follows. Catalyzes the hydrolysis of glutamine to glutamate and ammonia as part of the biosynthesis of pyridoxal 5'-phosphate. The resulting ammonia molecule is channeled to the active site of PdxS. The polypeptide is Pyridoxal 5'-phosphate synthase subunit PdxT (Tropheryma whipplei (strain TW08/27) (Whipple's bacillus)).